Reading from the N-terminus, the 946-residue chain is Zinc finger CCCH-type antiviral protein 1 (946 aa).

Residues 1 to 254 (MTDPEVFCFI…DRSKSRDRFH (254 aa)) form an N-terminal domain region. Positions 69 to 76 (RARVCRRK) match the Nuclear localization signal motif. C3H1-type zinc fingers lie at residues 73 to 86 (CRRK…DSLH), 87 to 113 (LCKL…HDVL), 150 to 172 (CKSY…ERLH), and 173 to 194 (ICEH…HNLM). 2 disordered regions span residues 221-283 (NKHT…KDPL) and 302-354 (RAQL…AAGF). The tract at residues 224-254 (TRRNPPSMRAPHPHRRGGAHRDRSKSRDRFH) is binding to EXOSC5. Positions 242–257 (AHRDRSKSRDRFHHNS) are enriched in basic and acidic residues. Ser-257 carries the phosphoserine modification. Residue Ser-262 is modified to Phosphoserine; by GSK3-beta. A phosphoserine mark is found at Ser-265, Ser-269, and Ser-273. At Thr-277 the chain carries Phosphothreonine. The Nuclear export signal signature appears at 283–290 (LEDVSADV). Residues Ser-324 and Ser-350 each carry the phosphoserine modification. The Nuclear localization signal signature appears at 412-413 (KR). Residue Ser-425 is modified to Phosphoserine. A disordered region spans residues 461–491 (NPAWPGTSTHNGPNGFSQIMDETPNVSKSSP). A compositionally biased stretch (polar residues) spans 466-477 (GTSTHNGPNGFS). The residue at position 508 (Tyr-508) is a Phosphotyrosine. The segment at 523 to 570 (GETTTPVQGSNRLPPSPLSSSTSHRVAASGSPGKSSTHASVSPASEPS) is disordered. Over residues 524 to 533 (ETTTPVQGSN) the composition is skewed to polar residues. At Ser-553 the chain carries Phosphoserine. Residues 554 to 567 (PGKSSTHASVSPAS) are compositionally biased toward polar residues. A phosphoserine mark is found at Ser-583 and Ser-680. The 88-residue stretch at 684–771 (FVEKTLNSVF…ASKTQRHVVR (88 aa)) folds into the WWE domain. The PARP catalytic domain maps to 805–946 (SPQRNASTVS…SLDSSGLQRK (142 aa)).

The protein belongs to the ARTD/PARP family. As to quaternary structure, homodimer or homooligomer. Homooligomerization is essential for its antiviral activity. Interacts with EXOSC5. Interacts (via N-terminal domain) with DDX17 in an RNA-independent manner. Interacts with EXOSC3, EXOSC7, DCP2 and DCP1A. Interacts with PARN in an RNA-independent manner. Interacts with XRN1 in an RNA-dependent manner. Interacts (via N-terminal domain) with DHX30 (via N-terminus) in an RNA-independent manner. Isoform 2 interacts (via zinc-fingers) with RIGI in an RNA-dependent manner. Post-translationally, phosphorylation at Ser-273 is essential for sequential phosphorylation of Ser-269, Ser-265, Ser-262 and Ser-257 by GSK3-beta. Phosphorylation by GSK3-beta enhances its antiviral activity.

The protein resides in the cytoplasm. It is found in the nucleus. Antiviral protein which inhibits the replication of viruses by recruiting the cellular RNA degradation machineries to degrade the viral mRNAs. Binds to a ZAP-responsive element (ZRE) present in the target viral mRNA, recruits cellular poly(A)-specific ribonuclease PARN to remove the poly(A) tail, and the 3'-5' exoribonuclease complex exosome to degrade the RNA body from the 3'-end. It also recruits the decapping complex DCP1-DCP2 through RNA helicase p72 (DDX17) to remove the cap structure of the viral mRNA to initiate its degradation from the 5'-end. Its target viruses belong to families which include retroviridae: human immunodeficiency virus type 1 (HIV-1) and moloney and murine leukemia virus (MoMLV), filoviridae: ebola virus (EBOV) and marburg virus (MARV), togaviridae: sindbis virus (SINV) and Ross river virus (RRV). Specifically targets the multiply spliced but not unspliced or singly spliced HIV-1 mRNAs for degradation. Isoform 1 is a more potent viral inhibitor than isoform 2. Isoform 2 acts as a positive regulator of RIG-I signaling resulting in activation of the downstream effector IRF3 leading to the expression of type I IFNs and IFN stimulated genes (ISGs). This Mus musculus (Mouse) protein is Zinc finger CCCH-type antiviral protein 1 (Zc3hav1).